Here is a 326-residue protein sequence, read N- to C-terminus: L-lactate dehydrogenase (326 aa).

NAD(+) is bound by residues V26, D47, K52, Y78, and G92–A93. Residues Q95 and R101 each coordinate substrate. NAD(+)-binding positions include T114, A131–N133, and S156. Residue N133 to D136 participates in substrate binding. Position 161-164 (D161–R164) interacts with substrate. Beta-D-fructose 1,6-bisphosphate-binding residues include R166 and H181. Catalysis depends on H188, which acts as the Proton acceptor. Y233 bears the Phosphotyrosine mark. Position 242 (T242) interacts with substrate.

The protein belongs to the LDH/MDH superfamily. LDH family. As to quaternary structure, homotetramer.

Its subcellular location is the cytoplasm. It carries out the reaction (S)-lactate + NAD(+) = pyruvate + NADH + H(+). It participates in fermentation; pyruvate fermentation to lactate; (S)-lactate from pyruvate: step 1/1. Allosterically activated by fructose 1,6-bisphosphate (FBP). In terms of biological role, catalyzes the conversion of lactate to pyruvate. The protein is L-lactate dehydrogenase of Corynebacterium jeikeium (strain K411).